The following is a 500-amino-acid chain: NAD(P)H-quinone oxidoreductase chain 4, chloroplastic (500 aa).

The next 14 membrane-spanning stretches (helical) occupy residues 4–24 (FPWLTIIVVFPISAGSLMLFL), 35–55 (YTICICILELLLTTYAFCYNF), 87–107 (IGTILLTGFITTLATLAAFPV), 113–130 (FFHFLMLAMYSGQIGSFS), 134–154 (LLLFFIMWELELIPVYLLLSM), 167–187 (FILYTAGSSIFLLIGVLGISL), 211–231 (ILFYIGFLIAFAVKSPIIPLH), 242–262 (HYSTCMLLAGILLKMGAYGLV), 272–292 (AHSMFSPWLLVVGTIQIIYAA), 305–325 (IAYSSVSHMGFIIIGISSITD), 330–350 (GAILQIISHGFIGAALFFLAG), 386–406 (LALPGMSGFIAEFIVFFGIIT), 416–436 (IFIIFVMAIGMILTPIYLLSM), and 462–482 (LFLSISILLPIIGIGIYPDFV).

The protein belongs to the complex I subunit 4 family.

The protein resides in the plastid. Its subcellular location is the chloroplast thylakoid membrane. The catalysed reaction is a plastoquinone + NADH + (n+1) H(+)(in) = a plastoquinol + NAD(+) + n H(+)(out). The enzyme catalyses a plastoquinone + NADPH + (n+1) H(+)(in) = a plastoquinol + NADP(+) + n H(+)(out). This Arabidopsis thaliana (Mouse-ear cress) protein is NAD(P)H-quinone oxidoreductase chain 4, chloroplastic (ndhD).